Consider the following 315-residue polypeptide: Protein ORANGE-LIKE, chloroplastic (315 aa).

Residues 1–16 (MTCFSSATPHRHHLLL) constitute a chloroplast transit peptide. A run of 2 helical transmembrane segments spans residues 155-175 (LYSTSVALISGIIFFGGLIAP) and 207-227 (IVASFSGGAVGVISTLMLIEV). The segment at 225–307 (IEVNNVKQQE…CTGMVTASEH (83 aa)) adopts a CR-type zinc-finger fold. A CXXCXGXG motif repeat occupies 238-245 (CKYCLGTG). One copy of the CXXCXXXG motif repeat lies at 249–256 (CARCSASG). One copy of the CXXCXGXG motif repeat lies at 282–289 (CLNCSGAG). The stretch at 293–300 (CPTCLCTG) is one CXXCXXXG motif repeat.

This sequence belongs to the orange-like family. In terms of assembly, interacts with PSY1.

The protein localises to the plastid. It is found in the chloroplast membrane. Functionally, may be associated with accumulation of carotenoids in chromoplasts. The chain is Protein ORANGE-LIKE, chloroplastic (ORLIKE) from Arabidopsis thaliana (Mouse-ear cress).